A 1556-amino-acid chain; its full sequence is Disco-interacting protein 2 homolog C (1556 aa).

Positions 7-120 (EGMALPLEVR…PMPSKRRSLV (114 aa)) constitute a DMAP1-binding domain. 2 disordered regions span residues 47 to 157 (YLPQ…SQGS) and 170 to 189 (GSTTSTTSSSSTQSGGSGAA). Residues 81 to 93 (GSRDERYRSDVHT) are compositionally biased toward basic and acidic residues. 2 stretches are compositionally biased toward polar residues: residues 120-136 (VVQTSMDAYTPPDTSSG) and 144-157 (QGDSQGTPTSSQGS). Residues 170–183 (GSTTSTTSSSSTQS) are compositionally biased toward low complexity. T264 is subject to Phosphothreonine.

It belongs to the DIP2 family.

The polypeptide is Disco-interacting protein 2 homolog C (DIP2C) (Homo sapiens (Human)).